The following is a 137-amino-acid chain: Basic phospholipase A2 homolog Ts-R6 (137 aa).

Residues 1–16 (MRTLWIMAVLLLGVEG) form the signal peptide. Intrachain disulfides connect Cys-42/Cys-130, Cys-44/Cys-60, Cys-59/Cys-110, Cys-65/Cys-137, Cys-66/Cys-103, Cys-73/Cys-97, and Cys-91/Cys-101.

As to expression, expressed by the venom gland.

Its subcellular location is the secreted. Its function is as follows. Snake venom phospholipase A2 homolog that induces local edema a few hours after injection (5-10 ug) in the hind paw and shows weak anticoagulant and myotoxic activities. The sequence is that of Basic phospholipase A2 homolog Ts-R6 from Trimeresurus stejnegeri (Chinese green tree viper).